A 382-amino-acid polypeptide reads, in one-letter code: Lipid-A-disaccharide synthase (382 aa).

The protein belongs to the LpxB family.

It catalyses the reaction a lipid X + a UDP-2-N,3-O-bis[(3R)-3-hydroxyacyl]-alpha-D-glucosamine = a lipid A disaccharide + UDP + H(+). Its pathway is bacterial outer membrane biogenesis; LPS lipid A biosynthesis. Functionally, condensation of UDP-2,3-diacylglucosamine and 2,3-diacylglucosamine-1-phosphate to form lipid A disaccharide, a precursor of lipid A, a phosphorylated glycolipid that anchors the lipopolysaccharide to the outer membrane of the cell. This chain is Lipid-A-disaccharide synthase, found in Dechloromonas aromatica (strain RCB).